The primary structure comprises 250 residues: PF03932 family protein CutC (250 aa).

The protein belongs to the CutC family.

It is found in the cytoplasm. The chain is PF03932 family protein CutC from Vibrio vulnificus (strain CMCP6).